The chain runs to 89 residues: MATVIAKVKVMPTSPEVEKESLKESLKELVEQNDAKCRGVTDEPLAFGLYTVYVMVEMEEKEGGMDPIEEAMNALENVESAEVVELSLV.

This sequence belongs to the EF-1-beta/EF-1-delta family.

In terms of biological role, promotes the exchange of GDP for GTP in EF-1-alpha/GDP, thus allowing the regeneration of EF-1-alpha/GTP that could then be used to form the ternary complex EF-1-alpha/GTP/AAtRNA. This Methanococcus maripaludis (strain DSM 14266 / JCM 13030 / NBRC 101832 / S2 / LL) protein is Elongation factor 1-beta.